The primary structure comprises 318 residues: Electron transfer flavoprotein subunit alpha (318 aa).

FAD is bound at residue 257 to 285; it reads LYIALGISGAIQHRAGMQTSKTIVAVNKD.

Belongs to the ETF alpha-subunit/FixB family. Heterodimer of an alpha and a beta subunit. Requires FAD as cofactor.

In terms of biological role, the electron transfer flavoprotein serves as a specific electron acceptor for other dehydrogenases. It transfers the electrons to the main respiratory chain via ETF-ubiquinone oxidoreductase (ETF dehydrogenase). This is Electron transfer flavoprotein subunit alpha (etfA) from Mycobacterium tuberculosis (strain CDC 1551 / Oshkosh).